Consider the following 339-residue polypeptide: DNA-directed RNA polymerase subunit alpha (339 aa).

The interval 1 to 233 is alpha N-terminal domain (alpha-NTD); that stretch reads MVREEVAGST…DLFLPFLHAE (233 aa). The tract at residues 264-339 is alpha C-terminal domain (alpha-CTD); it reads KKGIPLNCIF…IDLLKNKLSF (76 aa).

It belongs to the RNA polymerase alpha chain family. In plastids the minimal PEP RNA polymerase catalytic core is composed of four subunits: alpha, beta, beta', and beta''. When a (nuclear-encoded) sigma factor is associated with the core the holoenzyme is formed, which can initiate transcription.

The protein localises to the plastid. It is found in the chloroplast. It carries out the reaction RNA(n) + a ribonucleoside 5'-triphosphate = RNA(n+1) + diphosphate. In terms of biological role, DNA-dependent RNA polymerase catalyzes the transcription of DNA into RNA using the four ribonucleoside triphosphates as substrates. The protein is DNA-directed RNA polymerase subunit alpha of Thinopyrum bessarabicum (Wheatgrass).